Here is a 175-residue protein sequence, read N- to C-terminus: Electron transport protein HydN (175 aa).

4 consecutive 4Fe-4S ferredoxin-type domains span residues 2 to 32, 48 to 79, 80 to 109, and 124 to 157; these read NRFI…NQDC, KGVN…SRDK, GFVH…VVVR, and DKAE…CVDR. Cys-12, Cys-15, Cys-18, Cys-22, Cys-58, Cys-61, Cys-66, Cys-70, Cys-89, Cys-92, Cys-95, Cys-99, Cys-131, Cys-134, Cys-143, and Cys-147 together coordinate [4Fe-4S] cluster.

It depends on [4Fe-4S] cluster as a cofactor.

Functionally, electron transport from formate to hydrogen. In Escherichia coli O157:H7, this protein is Electron transport protein HydN (hydN).